Here is a 339-residue protein sequence, read N- to C-terminus: Protein RecA (339 aa).

73–80 (GPESSGKT) serves as a coordination point for ATP.

It belongs to the RecA family.

It is found in the cytoplasm. In terms of biological role, can catalyze the hydrolysis of ATP in the presence of single-stranded DNA, the ATP-dependent uptake of single-stranded DNA by duplex DNA, and the ATP-dependent hybridization of homologous single-stranded DNAs. It interacts with LexA causing its activation and leading to its autocatalytic cleavage. This Mycoplasmopsis pulmonis (strain UAB CTIP) (Mycoplasma pulmonis) protein is Protein RecA.